We begin with the raw amino-acid sequence, 147 residues long: SsrA-binding protein (147 aa).

The interval 124–147 is disordered; sequence KKHDKRQDIKDRDWARKQARQDFS. Over residues 128–147 the composition is skewed to basic and acidic residues; that stretch reads KRQDIKDRDWARKQARQDFS.

This sequence belongs to the SmpB family.

The protein resides in the cytoplasm. Functionally, required for rescue of stalled ribosomes mediated by trans-translation. Binds to transfer-messenger RNA (tmRNA), required for stable association of tmRNA with ribosomes. tmRNA and SmpB together mimic tRNA shape, replacing the anticodon stem-loop with SmpB. tmRNA is encoded by the ssrA gene; the 2 termini fold to resemble tRNA(Ala) and it encodes a 'tag peptide', a short internal open reading frame. During trans-translation Ala-aminoacylated tmRNA acts like a tRNA, entering the A-site of stalled ribosomes, displacing the stalled mRNA. The ribosome then switches to translate the ORF on the tmRNA; the nascent peptide is terminated with the 'tag peptide' encoded by the tmRNA and targeted for degradation. The ribosome is freed to recommence translation, which seems to be the essential function of trans-translation. The chain is SsrA-binding protein from Neorickettsia sennetsu (strain ATCC VR-367 / Miyayama) (Ehrlichia sennetsu).